The chain runs to 409 residues: L-cysteine:1D-myo-inositol 2-amino-2-deoxy-alpha-D-glucopyranoside ligase (409 aa).

Positions 1 to 27 (MHAWPASEVPALPGQGRDLRIHDTATG) are disordered. Cys43 contacts Zn(2+). L-cysteinyl-5'-AMP contacts are provided by residues 43-46 (CGIT), Thr58, and 81-83 (NVT). The short motif at 45–55 (ITPYDATHMGH) is the 'HIGH' region element. The short motif at 183–188 (ERGGDP) is the 'ERGGDP' region element. L-cysteinyl-5'-AMP is bound at residue Trp224. Cys228 lines the Zn(2+) pocket. An L-cysteinyl-5'-AMP-binding site is contributed by 246 to 248 (GSD). His253 lines the Zn(2+) pocket. Residue Val280 coordinates L-cysteinyl-5'-AMP. Positions 286–290 (KMSKS) match the 'KMSKS' region motif.

Belongs to the class-I aminoacyl-tRNA synthetase family. MshC subfamily. As to quaternary structure, monomer. The cofactor is Zn(2+).

It catalyses the reaction 1D-myo-inositol 2-amino-2-deoxy-alpha-D-glucopyranoside + L-cysteine + ATP = 1D-myo-inositol 2-(L-cysteinylamino)-2-deoxy-alpha-D-glucopyranoside + AMP + diphosphate + H(+). Catalyzes the ATP-dependent condensation of GlcN-Ins and L-cysteine to form L-Cys-GlcN-Ins. The sequence is that of L-cysteine:1D-myo-inositol 2-amino-2-deoxy-alpha-D-glucopyranoside ligase (mshC) from Streptomyces coelicolor (strain ATCC BAA-471 / A3(2) / M145).